The primary structure comprises 87 residues: U3-theraphotoxin-Hhn1a 6 (87 aa).

The N-terminal stretch at 1–24 (MVNMKASMFLTFAGLVLLFVVCYA) is a signal peptide. Residues 25 to 52 (SESEKKEFPKEMLSSIFAVDNDFKQEER) constitute a propeptide that is removed on maturation. Disulfide bonds link C54–C67, C61–C72, and C66–C79.

It belongs to the neurotoxin 10 (Hwtx-1) family. 51 (Hntx-8) subfamily. Hntx-8 sub-subfamily. Expressed by the venom gland.

It localises to the secreted. Its function is as follows. Ion channel inhibitor. In Cyriopagopus hainanus (Chinese bird spider), this protein is U3-theraphotoxin-Hhn1a 6.